Reading from the N-terminus, the 194-residue chain is Small ribosomal subunit protein eS7 (194 aa).

Belongs to the eukaryotic ribosomal protein eS7 family.

The sequence is that of Small ribosomal subunit protein eS7 (rps-7) from Caenorhabditis elegans.